Here is a 53-residue protein sequence, read N- to C-terminus: Photosystem II reaction center protein K (53 aa).

A propeptide spanning residues Met1–Ala16 is cleaved from the precursor. The helical transmembrane segment at Ile28 to Ala48 threads the bilayer.

It belongs to the PsbK family. As to quaternary structure, PSII is composed of 1 copy each of membrane proteins PsbA, PsbB, PsbC, PsbD, PsbE, PsbF, PsbH, PsbI, PsbJ, PsbK, PsbL, PsbM, PsbT, PsbX, PsbY, PsbZ, Psb30/Ycf12, at least 3 peripheral proteins of the oxygen-evolving complex and a large number of cofactors. It forms dimeric complexes.

The protein resides in the plastid. Its subcellular location is the chloroplast thylakoid membrane. One of the components of the core complex of photosystem II (PSII). PSII is a light-driven water:plastoquinone oxidoreductase that uses light energy to abstract electrons from H(2)O, generating O(2) and a proton gradient subsequently used for ATP formation. It consists of a core antenna complex that captures photons, and an electron transfer chain that converts photonic excitation into a charge separation. The chain is Photosystem II reaction center protein K from Huperzia lucidula (Shining clubmoss).